A 139-amino-acid chain; its full sequence is Metallothiol transferase FosB (139 aa).

One can recognise a VOC domain in the interval 4–119 (GINHITYSVS…DGHKLELHTG (116 aa)). Mg(2+)-binding residues include histidine 7, histidine 66, and glutamate 115. The Proton donor/acceptor role is filled by glutamate 115.

Belongs to the fosfomycin resistance protein family. FosB subfamily. As to quaternary structure, homodimer. Mg(2+) is required as a cofactor.

The protein localises to the cytoplasm. In terms of biological role, metallothiol transferase which confers resistance to fosfomycin by catalyzing the addition of a thiol cofactor to fosfomycin. L-cysteine is probably the physiological thiol donor. This Staphylococcus haemolyticus protein is Metallothiol transferase FosB.